We begin with the raw amino-acid sequence, 1165 residues long: Tectonin beta-propeller repeat-containing protein 1 (1165 aa).

TECPR repeat units lie at residues 209–240, 254–285, 301–332, and 344–376; these read LSVW…SLLD, DLLW…SIVE, SVVW…IEMV, and DQVW…KAIV. Positions 404-486 are disordered; that stretch reads RGSGESAPSD…GPATTPAELP (83 aa). The region spanning 611–717 is the PH domain; that stretch reads KTGALQWWCD…WLALLSLSCC (107 aa). The TECPR 5 repeat unit spans residues 729–756; it reads QAIWSITCKGDIFVSEPSPDLEAHEHPL. Phosphoserine is present on residues serine 938 and serine 949. TECPR repeat units follow at residues 953–984, 998–1029, 1044–1075, and 1087–1127; these read IALW…LHVG, YQVW…YHIP, TSVY…EHVS, and DQVW…DYGI. Positions 1140 to 1165 are disordered; sequence ATRAPRSSSQEQEPSAPPEAHDPVCC. The span at 1143 to 1153 shows a compositional bias: low complexity; the sequence is APRSSSQEQEP.

The protein belongs to the TECPR1 family. As to quaternary structure, interacts with ATG5; the interaction is direct. Interacts with WIPI2. Interacts with the ATG5-ATG12 conjugate, the interaction is however mutually exclusive with ATG16, since it does not interact with ATG12-ATG5-ATG16 complex.

Its subcellular location is the cytoplasmic vesicle. It localises to the autophagosome membrane. The protein localises to the lysosome membrane. Functionally, tethering factor involved in autophagy. Involved in autophagosome maturation by promoting the autophagosome fusion with lysosomes: acts by associating with both the ATG5-ATG12 conjugate and phosphatidylinositol-3-phosphate (PtdIns(3)P) present at the surface of autophagosomes. Also involved in selective autophagy against bacterial pathogens, by being required for phagophore/preautophagosomal structure biogenesis and maturation. This Pongo abelii (Sumatran orangutan) protein is Tectonin beta-propeller repeat-containing protein 1 (TECPR1).